Here is a 262-residue protein sequence, read N- to C-terminus: Dihydroorotate dehydrogenase B (NAD(+)), electron transfer subunit (262 aa).

The FAD-binding FR-type domain maps to Q3–V104. FAD contacts are provided by residues R53–S56, L70–R72, and G79–T80. Residues C226, C231, C234, and C249 each contribute to the [2Fe-2S] cluster site.

It belongs to the PyrK family. In terms of assembly, heterotetramer of 2 PyrK and 2 PyrD type B subunits. [2Fe-2S] cluster serves as cofactor. FAD is required as a cofactor.

It functions in the pathway pyrimidine metabolism; UMP biosynthesis via de novo pathway; orotate from (S)-dihydroorotate (NAD(+) route): step 1/1. Functionally, responsible for channeling the electrons from the oxidation of dihydroorotate from the FMN redox center in the PyrD type B subunit to the ultimate electron acceptor NAD(+). In Lactococcus lactis subsp. cremoris (strain SK11), this protein is Dihydroorotate dehydrogenase B (NAD(+)), electron transfer subunit.